The primary structure comprises 407 residues: UPF0597 protein NAMH_0191 (407 aa).

The protein belongs to the UPF0597 family.

The sequence is that of UPF0597 protein NAMH_0191 from Nautilia profundicola (strain ATCC BAA-1463 / DSM 18972 / AmH).